The following is a 158-amino-acid chain: 2-C-methyl-D-erythritol 2,4-cyclodiphosphate synthase (158 aa).

A divalent metal cation is bound by residues Asp9 and His11. 4-CDP-2-C-methyl-D-erythritol 2-phosphate contacts are provided by residues 9-11 (DVH) and 35-36 (HS). His43 provides a ligand contact to a divalent metal cation. 4-CDP-2-C-methyl-D-erythritol 2-phosphate is bound by residues 57–59 (DIG), 62–66 (FPDTD), 133–136 (TTTE), Phe140, and Arg143.

The protein belongs to the IspF family. As to quaternary structure, homotrimer. A divalent metal cation is required as a cofactor.

It catalyses the reaction 4-CDP-2-C-methyl-D-erythritol 2-phosphate = 2-C-methyl-D-erythritol 2,4-cyclic diphosphate + CMP. It participates in isoprenoid biosynthesis; isopentenyl diphosphate biosynthesis via DXP pathway; isopentenyl diphosphate from 1-deoxy-D-xylulose 5-phosphate: step 4/6. Its function is as follows. Involved in the biosynthesis of isopentenyl diphosphate (IPP) and dimethylallyl diphosphate (DMAPP), two major building blocks of isoprenoid compounds. Catalyzes the conversion of 4-diphosphocytidyl-2-C-methyl-D-erythritol 2-phosphate (CDP-ME2P) to 2-C-methyl-D-erythritol 2,4-cyclodiphosphate (ME-CPP) with a corresponding release of cytidine 5-monophosphate (CMP). This chain is 2-C-methyl-D-erythritol 2,4-cyclodiphosphate synthase, found in Geobacillus kaustophilus (strain HTA426).